A 492-amino-acid chain; its full sequence is Probable protein phosphatase 2C 33 (492 aa).

Residues 1–46 are disordered; the sequence is MGSCLSAESRSPRPGSPCSPAFSVRKRKNSKKRPGSRNSSFDYRRE. Positions 24-35 are enriched in basic residues; sequence VRKRKNSKKRPG. A PPM-type phosphatase domain is found at 64–393; sequence VACIYTQQGK…DDCAAVCLYL (330 aa). Asp-100, Gly-101, Asp-338, and Asp-384 together coordinate Mn(2+). Residues 406 to 468 are disordered; it reads SISKLEDGEE…ADNLDSEPGT (63 aa). Over residues 412–427 the composition is skewed to acidic residues; it reads DGEEEELKATTEDDDA. The segment covering 441-460 has biased composition (basic and acidic residues); that stretch reads SGKEIALDESETEKLIKEAD.

The protein belongs to the PP2C family. Mg(2+) serves as cofactor. It depends on Mn(2+) as a cofactor.

The enzyme catalyses O-phospho-L-seryl-[protein] + H2O = L-seryl-[protein] + phosphate. It carries out the reaction O-phospho-L-threonyl-[protein] + H2O = L-threonyl-[protein] + phosphate. In Arabidopsis thaliana (Mouse-ear cress), this protein is Probable protein phosphatase 2C 33 (PPC6-1).